Reading from the N-terminus, the 65-residue chain is MPKMKTNRGAAKRFKKTGSGRFKCKHNHLRHILTKKSSKRKRKLGPKFMVSAADHKRVVACLPYA.

It belongs to the bacterial ribosomal protein bL35 family.

The chain is Large ribosomal subunit protein bL35 from Aeromonas salmonicida (strain A449).